The chain runs to 298 residues: Aquaporin NIP2-1 (298 aa).

N-linked (GlcNAc...) asparagine glycosylation is found at N4, N13, and N26. Transmembrane regions (helical) follow at residues V51 to I71 and S85 to A105. Residues N108–A110 carry the NPA 1 motif. Transmembrane regions (helical) follow at residues I124–L144, S166–T186, and L194–S214. Positions N219–A221 match the NPA 2 motif. A helical transmembrane segment spans residues W237 to I257.

The protein belongs to the MIP/aquaporin (TC 1.A.8) family. NIP (TC 1.A.8.12) subfamily. As to expression, mainly expressed in the roots. In roots, it localizes in the main and lateral roots, but not in root hairs. Within a root, it localizes on the plasma membrane of the distal side of both exodermis and endodermis, where casparian strips exist (at protein level). Expressed low levels in leaves and anthers.

It localises to the cell membrane. Silicon influx transporter responsible for silicon transport from the external solution to the root cells. Is coupled with the silicon efflux transporter LSI2 in both exodermal and endodermal root cells for an efficient silicon transport across the cells into the stele. Silicon is beneficial to plant growth and helps plants to overcome abiotic and biotic stresses by preventing lodging (falling over) and increasing resistance to pests and diseases, as well as other stresses. Is coupled with LSI2 transporter in roots for efficient uptake of arsenite, which is further dispatched in shoots and grains. Mediates uptake of methylated arsenic species in roots. The polypeptide is Aquaporin NIP2-1 (Oryza sativa subsp. japonica (Rice)).